Consider the following 98-residue polypeptide: Integration host factor subunit alpha (98 aa).

The segment at 49-71 is disordered; sequence FGNFDLRDKNQRPGRNPKTGEDI.

This sequence belongs to the bacterial histone-like protein family. In terms of assembly, heterodimer of an alpha and a beta chain.

Functionally, this protein is one of the two subunits of integration host factor, a specific DNA-binding protein that functions in genetic recombination as well as in transcriptional and translational control. This Shewanella oneidensis (strain ATCC 700550 / JCM 31522 / CIP 106686 / LMG 19005 / NCIMB 14063 / MR-1) protein is Integration host factor subunit alpha.